We begin with the raw amino-acid sequence, 134 residues long: Small ribosomal subunit protein uS17c (134 aa).

The N-terminal 37 residues, His1 to Ala37, are a transit peptide targeting the chloroplast. Residues Phe106 to Glu134 are disordered.

It belongs to the universal ribosomal protein uS17 family. Part of the 30S ribosomal subunit.

The protein localises to the plastid. Its subcellular location is the chloroplast. One of the primary rRNA binding proteins, it binds specifically to the 5'-end of 16S ribosomal RNA. The sequence is that of Small ribosomal subunit protein uS17c (RPS17) from Pisum sativum (Garden pea).